The primary structure comprises 340 residues: KH domain-containing RNA-binding protein QKI (340 aa).

One can recognise a KH domain in the interval 87–153 (YVPVKEYPDF…WEHLNEDLHV (67 aa)). An SH3-binding motif is present at residues 275–278 (PPGP). The Nuclear localization signal motif lies at 323-329 (RVHPYQR).

This sequence belongs to the quaking family. Homodimer; does not require RNA to homodimerize.

It localises to the cytoplasm. The protein resides in the nucleus. RNA reader protein, which recognizes and binds specific RNAs, thereby regulating RNA metabolic processes, such as pre-mRNA splicing, circular RNA (circRNA) formation, mRNA export, mRNA stability and/or translation. Involved in various cellular processes, such as mRNA storage into stress granules, apoptosis, interferon response, glial cell fate and development. Binds to the 5'-NACUAAY-N(1,20)-UAAY-3' RNA core sequence. Acts as a mRNA modification reader that specifically recognizes and binds mRNA transcripts modified by internal N(7)-methylguanine (m7G). Promotes the formation of circular RNAs (circRNAs): acts by binding to sites flanking circRNA-forming exons. CircRNAs are produced by back-splicing circularization of pre-mRNAs. Required to protect and promote stability of mRNAs which promotes oligodendrocyte differentiation. Acts as an important regulator of muscle development. This is KH domain-containing RNA-binding protein QKI from Gallus gallus (Chicken).